Here is a 106-residue protein sequence, read N- to C-terminus: Small ribosomal subunit protein mS33 (106 aa).

Serine 2 carries the N-acetylserine modification. Positions 85 to 94 are enriched in basic residues; sequence LKKLRGKVKP. The segment at 85 to 106 is disordered; sequence LKKLRGKVKPRKGEGKRAAKKK. Residues 95 to 106 are compositionally biased toward basic and acidic residues; sequence RKGEGKRAAKKK.

The protein belongs to the mitochondrion-specific ribosomal protein mS33 family. As to quaternary structure, component of the mitochondrial ribosome small subunit (28S) which comprises a 12S rRNA and about 30 distinct proteins.

It localises to the mitochondrion. The sequence is that of Small ribosomal subunit protein mS33 from Bos taurus (Bovine).